The sequence spans 548 residues: Chaperonin GroEL (548 aa).

Residues 30 to 33 (TLGP), lysine 51, 87 to 91 (DGTTT), glycine 415, and aspartate 495 each bind ATP.

Belongs to the chaperonin (HSP60) family. In terms of assembly, forms a cylinder of 14 subunits composed of two heptameric rings stacked back-to-back. Interacts with the co-chaperonin GroES.

It is found in the cytoplasm. It carries out the reaction ATP + H2O + a folded polypeptide = ADP + phosphate + an unfolded polypeptide.. Functionally, together with its co-chaperonin GroES, plays an essential role in assisting protein folding. The GroEL-GroES system forms a nano-cage that allows encapsulation of the non-native substrate proteins and provides a physical environment optimized to promote and accelerate protein folding. This Yersinia pseudotuberculosis serotype O:1b (strain IP 31758) protein is Chaperonin GroEL.